Reading from the N-terminus, the 657-residue chain is Broad substrate specificity ATP-binding cassette transporter ABCG2 (657 aa).

The segment at M1–S25 is disordered. Residues M1–S395 lie on the Cytoplasmic side of the membrane. The 238-residue stretch at V48–P285 folds into the ABC transporter domain. ATP is bound by residues G79 to S86, R183 to E189, E210, and H242. In terms of domain architecture, ABC transmembrane type-2 spans L389–L653. A helical membrane pass occupies residues V396–L416. Residues K417–G428 are Extracellular-facing. A helical membrane pass occupies residues V429–V449. At V450–D477 the chain is on the cytoplasmic side. A helical membrane pass occupies residues L478–G498. Residues L499–F506 lie on the Extracellular side of the membrane. A helical membrane pass occupies residues F507–I527. Topologically, residues A528–S535 are cytoplasmic. Residues V536–V556 form a helical membrane-spanning segment. The Extracellular portion of the chain corresponds to N557 to H632. Cysteines 592 and 610 form a disulfide. 2 N-linked (GlcNAc...) asparagine glycosylation sites follow: N596 and N600. A helical transmembrane segment spans residues V633–L653. Topologically, residues K654–S657 are cytoplasmic.

Belongs to the ABC transporter superfamily. ABCG family. Eye pigment precursor importer (TC 3.A.1.204) subfamily. Homodimer; disulfide-linked. The minimal functional unit is a homodimer, but the major oligomeric form in plasma membrane is a homotetramer with possibility of higher order oligomerization up to homododecamers. N-glycosylated in brain capillary, kidney and small intestine but not in heart. In terms of processing, N-glycosylated. Glycosylation-deficient ABCG2 is normally expressed and functional. Post-translationally, phosphorylated. Phosphorylation may regulate the localization to the plasma membrane, the homooligomerization and therefore, the activity of the transporter. In terms of tissue distribution, highly expressed in brain capillary, kidney and small intestine. Lower expression in heart. Preferentially expressed (at protein level) on the luminal membrane of brain capillaries, in kidney and small intestine.

The protein localises to the cell membrane. The protein resides in the apical cell membrane. It localises to the mitochondrion membrane. The catalysed reaction is ATP + H2O + xenobioticSide 1 = ADP + phosphate + xenobioticSide 2.. The enzyme catalyses urate(in) + ATP + H2O = urate(out) + ADP + phosphate + H(+). It carries out the reaction indoxyl sulfate(in) + ATP + H2O = indoxyl sulfate(out) + ADP + phosphate + H(+). It catalyses the reaction sphing-4-enine 1-phosphate(in) + ATP + H2O = sphing-4-enine 1-phosphate(out) + ADP + phosphate + H(+). The catalysed reaction is estrone 3-sulfate(in) + ATP + H2O = estrone 3-sulfate(out) + ADP + phosphate + H(+). The enzyme catalyses dehydroepiandrosterone 3-sulfate(in) + ATP + H2O = dehydroepiandrosterone 3-sulfate(out) + ADP + phosphate + H(+). It carries out the reaction 4-methylumbelliferone sulfate(in) + ATP + H2O = 4-methylumbelliferone sulfate(out) + ADP + phosphate + H(+). It catalyses the reaction 5,7-dimethyl-2-methylamino-4-(3-pyridylmethyl)-1,3-benzothiazol-6-yl beta-D-glucuronate(in) + ATP + H2O = 5,7-dimethyl-2-methylamino-4-(3-pyridylmethyl)-1,3-benzothiazol-6-yl beta-D-glucuronate(out) + ADP + phosphate + H(+). The catalysed reaction is 4-methylumbelliferone beta-D-glucuronate(in) + ATP + H2O = 4-methylumbelliferone beta-D-glucuronate(out) + ADP + phosphate + H(+). The enzyme catalyses 5,7-dimethyl-2-methylamino-4-(3-pyridylmethyl)-1,3-benzothiazol-6-yl sulfate(in) + ATP + H2O = 5,7-dimethyl-2-methylamino-4-(3-pyridylmethyl)-1,3-benzothiazol-6-yl sulfate(out) + ADP + phosphate + H(+). It carries out the reaction 17beta-estradiol 17-O-(beta-D-glucuronate)(in) + ATP + H2O = 17beta-estradiol 17-O-(beta-D-glucuronate)(out) + ADP + phosphate + H(+). It catalyses the reaction methotrexate(in) + ATP + H2O = methotrexate(out) + ADP + phosphate + H(+). The catalysed reaction is riboflavin(in) + ATP + H2O = riboflavin(out) + ADP + phosphate + H(+). The enzyme catalyses pheophorbide a(in) + ATP + H2O = pheophorbide a(out) + ADP + phosphate + H(+). It carries out the reaction itaconate(in) + ATP + H2O = itaconate(out) + ADP + phosphate + H(+). Broad substrate specificity ATP-dependent transporter of the ATP-binding cassette (ABC) family that actively extrudes a wide variety of physiological compounds, dietary toxins and xenobiotics from cells. Involved in porphyrin homeostasis, mediating the export of protoporphyrin IX (PPIX) from both mitochondria to cytosol and cytosol to extracellular space, it also functions in the cellular export of heme. Also mediates the efflux of sphingosine-1-P from cells. Acts as a urate exporter functioning in both renal and extrarenal urate excretion. In kidney, it also functions as a physiological exporter of the uremic toxin indoxyl sulfate. Also involved in the excretion of steroids like estrone 3-sulfate/E1S, 3beta-sulfooxy-androst-5-en-17-one/DHEAS, and other sulfate conjugates. Mediates the secretion of the riboflavin and biotin vitamins into milk. Extrudes pheophorbide a, a phototoxic porphyrin catabolite of chlorophyll, reducing its bioavailability. Plays an important role in the exclusion of xenobiotics from the brain. It confers to cells a resistance to multiple drugs and other xenobiotics including mitoxantrone, pheophorbide, camptothecin, methotrexate, azidothymidine, and the anthracyclines daunorubicin and doxorubicin, through the control of their efflux. In placenta, it limits the penetration of drugs from the maternal plasma into the fetus. May play a role in early stem cell self-renewal by blocking differentiation. In inflammatory macrophages, exports itaconate from the cytosol to the extracellular compartment and limits the activation of TFEB-dependent lysosome biogenesis involved in antibacterial innate immune response. The polypeptide is Broad substrate specificity ATP-binding cassette transporter ABCG2 (Abcg2) (Rattus norvegicus (Rat)).